We begin with the raw amino-acid sequence, 314 residues long: Carbamate kinase (314 aa).

The protein belongs to the carbamate kinase family. Homodimer.

It is found in the cytoplasm. It carries out the reaction hydrogencarbonate + NH4(+) + ATP = carbamoyl phosphate + ADP + H2O + H(+). The polypeptide is Carbamate kinase (cpkA) (Pyrococcus horikoshii (strain ATCC 700860 / DSM 12428 / JCM 9974 / NBRC 100139 / OT-3)).